A 22-amino-acid polypeptide reads, in one-letter code: Phospholipase A2 (22 aa).

It belongs to the phospholipase A2 family. Group II subfamily. The cofactor is Ca(2+). Post-translationally, seven disulfide bonds are present. Expressed by the venom gland.

Its subcellular location is the secreted. The catalysed reaction is a 1,2-diacyl-sn-glycero-3-phosphocholine + H2O = a 1-acyl-sn-glycero-3-phosphocholine + a fatty acid + H(+). Its function is as follows. Snake venom phospholipase A2 (PLA2) that inhibits neuromuscular transmission by blocking acetylcholine release from the nerve termini. PLA2 catalyzes the calcium-dependent hydrolysis of the 2-acyl groups in 3-sn-phosphoglycerides. This is Phospholipase A2 from Daboia siamensis (Eastern Russel's viper).